We begin with the raw amino-acid sequence, 389 residues long: Protein Wnt-10b (389 aa).

An N-terminal signal peptide occupies residues M1 to S28. A Phosphothreonine modification is found at T46. Cystine bridges form between C83–C94, C136–C144, C146–C199, C247–C261, C249–C256, C318–C349, C334–C344, C348–C388, C364–C379, C366–C376, and C371–C372. N93 carries an N-linked (GlcNAc...) asparagine glycan. The tract at residues K171–G197 is disordered. Residues L177 to G189 are compositionally biased toward pro residues. S253 is lipidated: O-palmitoleoyl serine; by PORCN. An N-linked (GlcNAc...) asparagine glycan is attached at N335.

The protein belongs to the Wnt family. In terms of assembly, forms a soluble 1:1 complex with AFM; this prevents oligomerization and is required for prolonged biological activity. The complex with AFM may represent the physiological form in body fluids. In terms of processing, palmitoleoylation is required for efficient binding to frizzled receptors. Depalmitoleoylation leads to Wnt signaling pathway inhibition. As to expression, detected in most adult tissues. Highest levels were found in heart and skeletal muscle. Low levels are found in brain.

It localises to the secreted. The protein localises to the extracellular space. It is found in the extracellular matrix. In terms of biological role, member of the Wnt ligand gene family that encodes for secreted proteins, which activate the Wnt signaling cascade. Specifically activates canonical Wnt/beta-catenin signaling and thus triggers beta-catenin/LEF/TCF-mediated transcriptional programs. Involved in signaling networks controlling stemness, pluripotency and cell fate decisions. Acts in the immune system, mammary gland, adipose tissue, bone and skin. This Homo sapiens (Human) protein is Protein Wnt-10b (WNT10B).